We begin with the raw amino-acid sequence, 941 residues long: HMG box transcription factor BBX (941 aa).

Basic and acidic residues predominate over residues 1-18; that stretch reads MKGSNRNKDHSAEGEGVG. 4 disordered regions span residues 1–21, 39–80, 157–200, and 221–242; these read MKGS…GKRP, FSEE…EQRA, VKSP…FGMA, and TPEV…LRQK. 2 stretches are compositionally biased toward acidic residues: residues 39–52 and 63–75; these read FSEE…EEDI and LEQD…DDES. Positions 80-148 form a DNA-binding region, HMG box; it reads ARRPMNAFLL…AFMKANPGYK (69 aa). The segment covering 177–191 has biased composition (basic and acidic residues); it reads SSRDLPSPKKAKTEE. Residue Ser243 is modified to Phosphoserine. Residues 326–370 are a coiled coil; sequence GRIKELEKGKEEKEIKMEKTDETRLQKEAEFEKSAKENLRDSKEL. A Glycyl lysine isopeptide (Lys-Gly) (interchain with G-Cter in SUMO2) cross-link involves residue Lys385. The disordered stretch occupies residues 438 to 482; sequence IEDPAALNKPEKLKKKKKKSKMDRHGNDKSTPKKTCKKRQSSESD. Residues 449 to 459 are compositionally biased toward basic residues; it reads KLKKKKKKSKM. A phosphoserine mark is found at Ser478 and Ser485. Composition is skewed to basic and acidic residues over residues 499–508 and 536–552; these read GIEKLGDTPR and KKMS…ESRP. Disordered stretches follow at residues 499 to 600 and 635 to 677; these read GIEK…SDCH and NVDR…KKTK. Lys573 participates in a covalent cross-link: Glycyl lysine isopeptide (Lys-Gly) (interchain with G-Cter in SUMO2). Positions 661-670 are enriched in low complexity; sequence TFSQSGTSGS. Lys696 participates in a covalent cross-link: Glycyl lysine isopeptide (Lys-Gly) (interchain with G-Cter in SUMO2). Phosphoserine is present on Ser704. Disordered regions lie at residues 714–771, 803–888, and 912–941; these read PVPR…DKWS, IPSI…SSTP, and HRGQ…CADQ. Over residues 723-742 the composition is skewed to polar residues; that stretch reads GNVSSEPTKTSKGPFQSQKK. Basic residues predominate over residues 743 to 757; sequence NLFHKIVSKYKHKKE. Basic and acidic residues predominate over residues 758–771; it reads KPNVPEKGSGDKWS. Residues 805-817 are compositionally biased toward polar residues; the sequence is SIFNTPEPTTTQE. Position 822 is a phosphoserine (Ser822). Positions 823–834 are enriched in basic residues; the sequence is QKRKARKTKITH. Residue Ser844 is modified to Phosphoserine. Over residues 866 to 882 the composition is skewed to basic and acidic residues; that stretch reads TETDCNDKCSHNTEVGE.

The protein resides in the nucleus. Its function is as follows. Transcription factor that is necessary for cell cycle progression from G1 to S phase. This Homo sapiens (Human) protein is HMG box transcription factor BBX (BBX).